A 112-amino-acid polypeptide reads, in one-letter code: Cytochrome c (112 aa).

Positions 23, 26, 27, and 89 each coordinate heme c.

It belongs to the cytochrome c family. Post-translationally, binds 1 heme c group covalently per subunit.

It is found in the mitochondrion intermembrane space. Electron carrier protein. The oxidized form of the cytochrome c heme group can accept an electron from the heme group of the cytochrome c1 subunit of cytochrome reductase. Cytochrome c then transfers this electron to the cytochrome oxidase complex, the final protein carrier in the mitochondrial electron-transport chain. This chain is Cytochrome c (CYC1), found in Chlamydomonas reinhardtii (Chlamydomonas smithii).